The sequence spans 276 residues: Putative pyruvate, phosphate dikinase regulatory protein (276 aa).

Residue 151 to 158 (GISRTSKT) coordinates ADP.

The protein belongs to the pyruvate, phosphate/water dikinase regulatory protein family. PDRP subfamily.

It catalyses the reaction N(tele)-phospho-L-histidyl/L-threonyl-[pyruvate, phosphate dikinase] + ADP = N(tele)-phospho-L-histidyl/O-phospho-L-threonyl-[pyruvate, phosphate dikinase] + AMP + H(+). The catalysed reaction is N(tele)-phospho-L-histidyl/O-phospho-L-threonyl-[pyruvate, phosphate dikinase] + phosphate + H(+) = N(tele)-phospho-L-histidyl/L-threonyl-[pyruvate, phosphate dikinase] + diphosphate. Bifunctional serine/threonine kinase and phosphorylase involved in the regulation of the pyruvate, phosphate dikinase (PPDK) by catalyzing its phosphorylation/dephosphorylation. This is Putative pyruvate, phosphate dikinase regulatory protein from Streptococcus agalactiae serotype Ia (strain ATCC 27591 / A909 / CDC SS700).